An 88-amino-acid polypeptide reads, in one-letter code: Small ribosomal subunit protein uS15 (88 aa).

Belongs to the universal ribosomal protein uS15 family. As to quaternary structure, part of the 30S ribosomal subunit. Forms a bridge to the 50S subunit in the 70S ribosome, contacting the 23S rRNA.

Its function is as follows. One of the primary rRNA binding proteins, it binds directly to 16S rRNA where it helps nucleate assembly of the platform of the 30S subunit by binding and bridging several RNA helices of the 16S rRNA. Functionally, forms an intersubunit bridge (bridge B4) with the 23S rRNA of the 50S subunit in the ribosome. The sequence is that of Small ribosomal subunit protein uS15 from Thermoanaerobacter pseudethanolicus (strain ATCC 33223 / 39E) (Clostridium thermohydrosulfuricum).